A 393-amino-acid polypeptide reads, in one-letter code: S-adenosylmethionine synthase 1 (393 aa).

E9 lines the Mg(2+) pocket. ATP is bound at residue H15. E43 contributes to the K(+) binding site. 2 residues coordinate L-methionine: E56 and Q99. C114 carries the post-translational modification S-nitrosocysteine. Residues 167 to 169, 235 to 238, D246, 252 to 253, A269, K273, and K277 each bind ATP; these read DGK, SGRF, and RK. Residue D246 coordinates L-methionine. Residue K277 coordinates L-methionine.

Belongs to the AdoMet synthase family. As to quaternary structure, homotetramer. Interacts with GRF3. It depends on Mn(2+) as a cofactor. Mg(2+) serves as cofactor. The cofactor is Co(2+). K(+) is required as a cofactor. In terms of processing, S-nitrosylated in the presence of NO. The inhibition of SAM1 activity by S-nitrosylation could contribute to the cross-talk between ethylene and NO signaling. In terms of tissue distribution, highly expressed in stems and roots.

It is found in the cytoplasm. It carries out the reaction L-methionine + ATP + H2O = S-adenosyl-L-methionine + phosphate + diphosphate. Its pathway is amino-acid biosynthesis; S-adenosyl-L-methionine biosynthesis; S-adenosyl-L-methionine from L-methionine: step 1/1. Its activity is regulated as follows. Reversibly inhibited by NO. Inhibited by 5,5'-dithiobis-2-nitrobenzoic acid (DTNB) and N-ethylmaleimide (NEM) (in vitro). Its function is as follows. Catalyzes the formation of S-adenosylmethionine from methionine and ATP. The reaction comprises two steps that are both catalyzed by the same enzyme: formation of S-adenosylmethionine (AdoMet) and triphosphate, and subsequent hydrolysis of the triphosphate. This is S-adenosylmethionine synthase 1 (SAM1) from Arabidopsis thaliana (Mouse-ear cress).